The sequence spans 533 residues: L-aspartate oxidase 1 (533 aa).

FAD is bound by residues 10–13 (SGLA), lysine 32, 39–46 (ASDWAQGG), and aspartate 214. The active-site Proton donor/acceptor is arginine 281. FAD contacts are provided by residues glutamate 366 and 382 to 383 (SL).

Belongs to the FAD-dependent oxidoreductase 2 family. NadB subfamily. FAD serves as cofactor.

The protein resides in the cytoplasm. The enzyme catalyses L-aspartate + O2 = iminosuccinate + H2O2. The protein operates within cofactor biosynthesis; NAD(+) biosynthesis; iminoaspartate from L-aspartate (oxidase route): step 1/1. Catalyzes the oxidation of L-aspartate to iminoaspartate, the first step in the de novo biosynthesis of NAD(+). This is L-aspartate oxidase 1 (nadB1) from Ralstonia nicotianae (strain ATCC BAA-1114 / GMI1000) (Ralstonia solanacearum).